Here is a 159-residue protein sequence, read N- to C-terminus: NADH dehydrogenase [ubiquinone] 1 beta subcomplex subunit 10 (159 aa).

Belongs to the complex I NDUFB10 subunit family. As to quaternary structure, complex I is composed of 45 different subunits.

Its subcellular location is the mitochondrion inner membrane. In terms of biological role, accessory subunit of the mitochondrial membrane respiratory chain NADH dehydrogenase (Complex I), that is believed not to be involved in catalysis. Complex I functions in the transfer of electrons from NADH to the respiratory chain. The immediate electron acceptor for the enzyme is believed to be ubiquinone. The protein is NADH dehydrogenase [ubiquinone] 1 beta subcomplex subunit 10 of Bombyx mori (Silk moth).